The chain runs to 267 residues: Hydroxynaphthalene reductase-like protein Arp2 (267 aa).

NADP(+) is bound by residues Ile-25, Asn-45, Asp-71, and Asn-98. Catalysis depends on proton donor residues Ser-147 and Ser-148. Positions 162, 166, 195, and 197 each coordinate NADP(+). Tyr-162 serves as the catalytic Proton acceptor. Residue Lys-166 is the Lowers pKa of active site Tyr of the active site.

It belongs to the short-chain dehydrogenases/reductases (SDR) family.

Functionally, hydroxynaphthalene reductase-like protein; part of the Pks2 gene cluster that mediates the formation of infectious structures (appressoria), enabling these fungi to kill insects faster. The product of the Pks2 gene cluster is different from the one of Pks1 and has still not been identified. In Metarhizium acridum (strain CQMa 102), this protein is Hydroxynaphthalene reductase-like protein Arp2.